Consider the following 172-residue polypeptide: Ribosome maturation factor RimM (172 aa).

The region spanning P96 to L169 is the PRC barrel domain.

This sequence belongs to the RimM family. Binds ribosomal protein uS19.

Its subcellular location is the cytoplasm. In terms of biological role, an accessory protein needed during the final step in the assembly of 30S ribosomal subunit, possibly for assembly of the head region. Essential for efficient processing of 16S rRNA. May be needed both before and after RbfA during the maturation of 16S rRNA. It has affinity for free ribosomal 30S subunits but not for 70S ribosomes. This is Ribosome maturation factor RimM from Mycolicibacterium vanbaalenii (strain DSM 7251 / JCM 13017 / BCRC 16820 / KCTC 9966 / NRRL B-24157 / PYR-1) (Mycobacterium vanbaalenii).